The following is a 281-amino-acid chain: Phosphate import ATP-binding protein PstB (281 aa).

The region spanning 33–276 (FKIENLSLWY…PQLKRTRDYI (244 aa)) is the ABC transporter domain. 67-74 (GPSGCGKS) provides a ligand contact to ATP.

It belongs to the ABC transporter superfamily. Phosphate importer (TC 3.A.1.7) family. As to quaternary structure, the complex is composed of two ATP-binding proteins (PstB), two transmembrane proteins (PstC and PstA) and a solute-binding protein (PstS).

Its subcellular location is the cell membrane. The enzyme catalyses phosphate(out) + ATP + H2O = ADP + 2 phosphate(in) + H(+). Functionally, part of the ABC transporter complex PstSACB involved in phosphate import. Responsible for energy coupling to the transport system. This is Phosphate import ATP-binding protein PstB from Mycoplasma mobile (strain ATCC 43663 / 163K / NCTC 11711) (Mesomycoplasma mobile).